Reading from the N-terminus, the 282-residue chain is Proteasome subunit beta (282 aa).

Residues Met1–Gly55 constitute a propeptide, removed in mature form; by autocatalysis. Thr56 acts as the Nucleophile in catalysis.

Belongs to the peptidase T1B family. In terms of assembly, the 20S proteasome core is composed of 14 alpha and 14 beta subunits that assemble into four stacked heptameric rings, resulting in a barrel-shaped structure. The two inner rings, each composed of seven catalytic beta subunits, are sandwiched by two outer rings, each composed of seven alpha subunits. The catalytic chamber with the active sites is on the inside of the barrel. Has a gated structure, the ends of the cylinder being occluded by the N-termini of the alpha-subunits. Is capped by the proteasome-associated ATPase, ARC.

The protein localises to the cytoplasm. The catalysed reaction is Cleavage of peptide bonds with very broad specificity.. Its pathway is protein degradation; proteasomal Pup-dependent pathway. The formation of the proteasomal ATPase ARC-20S proteasome complex, likely via the docking of the C-termini of ARC into the intersubunit pockets in the alpha-rings, may trigger opening of the gate for substrate entry. Interconversion between the open-gate and close-gate conformations leads to a dynamic regulation of the 20S proteasome proteolysis activity. Its function is as follows. Component of the proteasome core, a large protease complex with broad specificity involved in protein degradation. This Actinosynnema mirum (strain ATCC 29888 / DSM 43827 / JCM 3225 / NBRC 14064 / NCIMB 13271 / NRRL B-12336 / IMRU 3971 / 101) protein is Proteasome subunit beta.